A 1696-amino-acid polypeptide reads, in one-letter code: uncharacterized protein (1696 aa).

4 disordered regions span residues 1 to 113, 151 to 194, 258 to 284, and 299 to 376; these read MDSS…HPQY, DSWT…SRSR, DVTRSSASREGARETRNEGRTLYPEKK, and GRRE…KQRG. Residues 21–42 show a composition bias toward pro residues; the sequence is LHPPSAPLPPPPPLPPPPPPRQ. Over residues 52 to 61 the composition is skewed to polar residues; that stretch reads GRSTQSNGQR. Low complexity predominate over residues 96–113; the sequence is QQQHQPLSLQQQQQHPQY. Over residues 170 to 183 the composition is skewed to polar residues; the sequence is RNYQYDYSRNSSGV. Composition is skewed to basic and acidic residues over residues 267-284, 325-340, and 358-376; these read EGARETRNEGRTLYPEKK, ETPRSYKNSRENEWSR, and RGKEHLGHSDRGLVEKQRG. S378 carries the post-translational modification Phosphoserine. 7 disordered regions span residues 419–483, 688–724, 1063–1090, 1184–1211, 1319–1340, 1361–1429, and 1658–1696; these read RALL…GGKL, SDIGGIEDDNKRIDKNVDSLSPENDSSRGRPMGLDSP, IKHKEDNCTESVEVETHEEKAKLPGGTS, TSKSIEKIESSGGTSEHRTPETDIVAGS, GEAVSSDGQVSGTEIPGGSGVR, VVSV…SDAS, and SESRCNQSISLPDDALDTRSAANMVSERPSSSAFSDSGM. 2 stretches are compositionally biased toward basic and acidic residues: residues 421 to 436 and 695 to 704; these read LLSDKNEKVSVTERNG and DDNKRIDKNV. S708 is modified (phosphoserine). The segment covering 1184–1204 has biased composition (basic and acidic residues); the sequence is TSKSIEKIESSGGTSEHRTPE. A compositionally biased stretch (basic and acidic residues) spans 1361-1370; it reads VVSVPHRDPQ. Polar residues-rich tracts occupy residues 1389-1398, 1658-1667, and 1677-1696; these read NYSTQKSYPS, SESRCNQSIS, and SAANMVSERPSSSAFSDSGM.

This is an uncharacterized protein from Arabidopsis thaliana (Mouse-ear cress).